Consider the following 427-residue polypeptide: UDP-N-acetylglucosamine--N-acetylmuramyl-(pentapeptide) pyrophosphoryl-undecaprenol N-acetylglucosamine transferase (427 aa).

Residues 29–31, N141, R177, S205, I258, and Q303 each bind UDP-N-acetyl-alpha-D-glucosamine; that span reads TGG. The segment at 408–427 is disordered; the sequence is SLHPIPDSRFPIRTSAGGAQ.

Belongs to the glycosyltransferase 28 family. MurG subfamily.

It localises to the cell inner membrane. The enzyme catalyses di-trans,octa-cis-undecaprenyl diphospho-N-acetyl-alpha-D-muramoyl-L-alanyl-D-glutamyl-meso-2,6-diaminopimeloyl-D-alanyl-D-alanine + UDP-N-acetyl-alpha-D-glucosamine = di-trans,octa-cis-undecaprenyl diphospho-[N-acetyl-alpha-D-glucosaminyl-(1-&gt;4)]-N-acetyl-alpha-D-muramoyl-L-alanyl-D-glutamyl-meso-2,6-diaminopimeloyl-D-alanyl-D-alanine + UDP + H(+). Its pathway is cell wall biogenesis; peptidoglycan biosynthesis. Its function is as follows. Cell wall formation. Catalyzes the transfer of a GlcNAc subunit on undecaprenyl-pyrophosphoryl-MurNAc-pentapeptide (lipid intermediate I) to form undecaprenyl-pyrophosphoryl-MurNAc-(pentapeptide)GlcNAc (lipid intermediate II). The polypeptide is UDP-N-acetylglucosamine--N-acetylmuramyl-(pentapeptide) pyrophosphoryl-undecaprenol N-acetylglucosamine transferase (Xanthomonas campestris pv. campestris (strain 8004)).